Here is a 201-residue protein sequence, read N- to C-terminus: Putative 3-methyladenine DNA glycosylase (201 aa).

This sequence belongs to the DNA glycosylase MPG family.

The sequence is that of Putative 3-methyladenine DNA glycosylase from Nitrosococcus oceani (strain ATCC 19707 / BCRC 17464 / JCM 30415 / NCIMB 11848 / C-107).